The sequence spans 458 residues: UDP-N-acetylmuramate--L-alanine ligase (458 aa).

ATP is bound at residue 115 to 121 (GSHGKTT).

Belongs to the MurCDEF family.

Its subcellular location is the cytoplasm. It catalyses the reaction UDP-N-acetyl-alpha-D-muramate + L-alanine + ATP = UDP-N-acetyl-alpha-D-muramoyl-L-alanine + ADP + phosphate + H(+). It participates in cell wall biogenesis; peptidoglycan biosynthesis. In terms of biological role, cell wall formation. The chain is UDP-N-acetylmuramate--L-alanine ligase from Anaeromyxobacter dehalogenans (strain 2CP-1 / ATCC BAA-258).